Consider the following 187-residue polypeptide: Methylamine dehydrogenase light chain (187 aa).

The tat-type signal signal peptide spans 1-57 (MKKDTGFDSKIEKLARTTASKTGRRGFIGRLGGFLVGSALLPLLPVDRRSRLGGEVQ). 6 disulfides stabilise this stretch: Cys79/Cys144, Cys85/Cys117, Cys92/Cys177, Cys94/Cys142, Cys102/Cys133, and Cys134/Cys165. Trp113 is subject to Tryptophylquinone. The segment at residues 113 to 164 (WVASCYNPGDQQTYLIAYRDCCGKQTCGRCNCVNTQGELPVYRPEFNNDIVW) is a cross-link (tryptophan tryptophylquinone (Trp-Trp)).

Belongs to the aromatic amine dehydrogenase light chain family. In terms of assembly, heterotetramer of two light and two heavy chains. Tryptophan tryptophylquinone residue serves as cofactor. Predicted to be exported by the Tat system. The position of the signal peptide cleavage has not been experimentally proven. In terms of processing, tryptophan tryptophylquinone (TTQ) is formed by oxidation of the indole ring of a tryptophan to form tryptophylquinone followed by covalent cross-linking with another tryptophan residue.

The protein resides in the periplasm. It carries out the reaction 2 oxidized [amicyanin] + methylamine + H2O = 2 reduced [amicyanin] + formaldehyde + NH4(+) + 2 H(+). The protein operates within one-carbon metabolism; methylamine degradation; formaldehyde from methylamine: step 1/1. Functionally, methylamine dehydrogenase carries out the oxidation of methylamine. Electrons are passed from methylamine dehydrogenase to amicyanin. This is Methylamine dehydrogenase light chain (mauA) from Methylophilus methylotrophus (Bacterium W3A1).